A 728-amino-acid polypeptide reads, in one-letter code: Cellulose synthase-like protein E6 (728 aa).

2 consecutive transmembrane segments (helical) span residues 21–43 (AVYR…YRAT) and 53–73 (AAWL…VITQ). Residues D141 and D446 contribute to the active site. The next 5 helical transmembrane spans lie at 523–543 (LWAA…LGLV), 546–566 (TPLF…VFCV), 646–666 (PEFV…VAGL), 669–689 (IMAG…LIVI), and 707–727 (IPLP…LLPI).

It belongs to the glycosyltransferase 2 family. Plant cellulose synthase-like E subfamily.

It localises to the golgi apparatus membrane. Functionally, thought to be a Golgi-localized beta-glycan synthase that polymerize the backbones of noncellulosic polysaccharides (hemicelluloses) of plant cell wall. This is Cellulose synthase-like protein E6 (CSLE6) from Oryza sativa subsp. japonica (Rice).